A 500-amino-acid polypeptide reads, in one-letter code: ATP synthase subunit alpha (500 aa).

Residue 169–176 (GDRQTGKT) participates in ATP binding.

The protein belongs to the ATPase alpha/beta chains family. F-type ATPases have 2 components, CF(1) - the catalytic core - and CF(0) - the membrane proton channel. CF(1) has five subunits: alpha(3), beta(3), gamma(1), delta(1), epsilon(1). CF(0) has three main subunits: a(1), b(2) and c(9-12). The alpha and beta chains form an alternating ring which encloses part of the gamma chain. CF(1) is attached to CF(0) by a central stalk formed by the gamma and epsilon chains, while a peripheral stalk is formed by the delta and b chains.

It localises to the cell membrane. The enzyme catalyses ATP + H2O + 4 H(+)(in) = ADP + phosphate + 5 H(+)(out). In terms of biological role, produces ATP from ADP in the presence of a proton gradient across the membrane. The alpha chain is a regulatory subunit. This chain is ATP synthase subunit alpha, found in Lactococcus lactis subsp. lactis (strain IL1403) (Streptococcus lactis).